Consider the following 329-residue polypeptide: Ribosomal RNA small subunit methyltransferase C (329 aa).

It belongs to the methyltransferase superfamily. RsmC family. As to quaternary structure, monomer.

The protein localises to the cytoplasm. The enzyme catalyses guanosine(1207) in 16S rRNA + S-adenosyl-L-methionine = N(2)-methylguanosine(1207) in 16S rRNA + S-adenosyl-L-homocysteine + H(+). Functionally, specifically methylates the guanine in position 1207 of 16S rRNA in the 30S particle. The polypeptide is Ribosomal RNA small subunit methyltransferase C (Haemophilus ducreyi (strain 35000HP / ATCC 700724)).